The following is a 706-amino-acid chain: Polyribonucleotide nucleotidyltransferase (706 aa).

2 residues coordinate Mg(2+): D487 and D493. Positions 553–612 (PRLFTMKINQDKIREVIGKGGETIRAITAETGTEINIAEDGTITIAATTQEAGDAAKKRI) constitute a KH domain. The S1 motif domain maps to 622 to 692 (GKVYEGTVVK…DRGRVRLSIK (71 aa)).

Belongs to the polyribonucleotide nucleotidyltransferase family. Requires Mg(2+) as cofactor.

It localises to the cytoplasm. It catalyses the reaction RNA(n+1) + phosphate = RNA(n) + a ribonucleoside 5'-diphosphate. Involved in mRNA degradation. Catalyzes the phosphorolysis of single-stranded polyribonucleotides processively in the 3'- to 5'-direction. The polypeptide is Polyribonucleotide nucleotidyltransferase (Neisseria meningitidis serogroup A / serotype 4A (strain DSM 15465 / Z2491)).